The primary structure comprises 323 residues: Aldo-keto reductase family 1 member C3 (323 aa).

NADP(+) contacts are provided by residues 20–24 (GFGTY) and D50. Y55 serves as the catalytic Proton donor. H117 is a binding site for substrate. NADP(+) contacts are provided by residues 166-167 (SN), Q190, 216-221 (YSALGS), and 270-280 (KSYNEQRIREN).

Belongs to the aldo/keto reductase family.

The protein resides in the cytoplasm. The catalysed reaction is a 3alpha-hydroxysteroid + NADP(+) = a 3-oxosteroid + NADPH + H(+). The enzyme catalyses a 3alpha-hydroxysteroid + NAD(+) = a 3-oxosteroid + NADH + H(+). It catalyses the reaction prostaglandin F2alpha + NADP(+) = prostaglandin D2 + NADPH + H(+). It carries out the reaction testosterone + NAD(+) = androst-4-ene-3,17-dione + NADH + H(+). The catalysed reaction is testosterone + NADP(+) = androst-4-ene-3,17-dione + NADPH + H(+). The enzyme catalyses prostaglandin F2alpha + NADP(+) = prostaglandin H2 + NADPH + H(+). It catalyses the reaction prostaglandin D2 + NADPH + H(+) = 11beta-prostaglandin F2 + NADP(+). It carries out the reaction prostaglandin D2-ethanolamide + NADPH + H(+) = 11beta-prostaglandin F2-ethanolamide + NADP(+). The catalysed reaction is 17beta-estradiol + NADP(+) = estrone + NADPH + H(+). The enzyme catalyses 17beta-estradiol + NAD(+) = estrone + NADH + H(+). It catalyses the reaction (20S)-hydroxypregn-4-en-3-one + NADP(+) = progesterone + NADPH + H(+). It carries out the reaction (20S)-hydroxypregn-4-en-3-one + NAD(+) = progesterone + NADH + H(+). The catalysed reaction is 5alpha-androstane-3alpha,17beta-diol + NADP(+) = 17beta-hydroxy-5alpha-androstan-3-one + NADPH + H(+). The enzyme catalyses 5alpha-androstane-3alpha,17beta-diol + NAD(+) = 17beta-hydroxy-5alpha-androstan-3-one + NADH + H(+). It catalyses the reaction androsterone + NADPH + H(+) = 5alpha-androstane-3alpha,17beta-diol + NADP(+). It carries out the reaction 5alpha-androstane-3alpha,17beta-diol + NAD(+) = androsterone + NADH + H(+). The catalysed reaction is 5alpha-androstane-3beta,17beta-diol + NADP(+) = 17beta-hydroxy-5alpha-androstan-3-one + NADPH + H(+). The enzyme catalyses 9-cis-retinol + NADP(+) = 9-cis-retinal + NADPH + H(+). The protein operates within steroid metabolism. In terms of biological role, cytosolic aldo-keto reductase that catalyzes the NADH and NADPH-dependent reduction of ketosteroids to hydroxysteroids. Acts as a NAD(P)(H)-dependent 3-, 17- and 20-ketosteroid reductase on the steroid nucleus and side chain and regulates the metabolism of androgens, estrogens and progesterone. Displays the ability to catalyze both oxidation and reduction in vitro, but most probably acts as a reductase in vivo since the oxidase activity measured in vitro is inhibited by physiological concentration of NADPH. Acts preferentially as a 17-ketosteroid reductase and has the highest catalytic efficiency of the AKR1C enzyme for the reduction of delta4-androstenedione to form testosterone. Reduces prostaglandin (PG) D2 to 11beta-prostaglandin F2, progesterone to 20alpha-hydroxyprogesterone and estrone to 17beta-estradiol. Catalyzes the transformation of the potent androgen dihydrotestosterone (DHT) into the less active form, 5-alpha-androstan-3-alpha,17-beta-diol (3-alpha-diol). Also displays retinaldehyde reductase activity toward 9-cis-retinal. In Pongo abelii (Sumatran orangutan), this protein is Aldo-keto reductase family 1 member C3 (AKR1C3).